We begin with the raw amino-acid sequence, 156 residues long: Large ribosomal subunit protein uL22 (156 aa).

Belongs to the universal ribosomal protein uL22 family. As to quaternary structure, part of the 50S ribosomal subunit.

Functionally, this protein binds specifically to 23S rRNA. It makes multiple contacts with different domains of the 23S rRNA in the assembled 50S subunit and ribosome. Its function is as follows. The globular domain of the protein is located near the polypeptide exit tunnel on the outside of the subunit, while an extended beta-hairpin is found that lines the wall of the exit tunnel in the center of the 70S ribosome. In Aeropyrum pernix (strain ATCC 700893 / DSM 11879 / JCM 9820 / NBRC 100138 / K1), this protein is Large ribosomal subunit protein uL22.